Here is a 689-residue protein sequence, read N- to C-terminus: MIDRYTHQQLRIGLVSPQQISTWSKKILPNGEIVGEVTKPYTFHYKTNKPEKDGLFCERIFGPIKSGICACGNYRVIGDEKEDPQFCEQCGVEFVDSRIRRYQMGYIKLAYPVMHVWYLKRLPSYIVTLLDKPLNELEDLVYCNFYFARPIDKKPTFLRLRGLLEYEIQPWKYRIPIFFTTRSFDTFRNREMSTGGGSIRQQLANLDLRIIIDYSLVEWKELEEEEPTGNEWEDRKVGRRKDFLLRRMELAKHFIRTNIEPKWMVLRLLPVLPPELRPIYHIDEDKLVTSDINEIYRRIIYRNNTLTDLLTTSIATPEELIISQEKLLQEAVDALLDNGICGQPMRDDHNRVYKSLSDVIEGKEGRVRETLLGKRVDYSGRSVIVVGPSLSLHRCGLPREIAIELFQAFVIRDLIRKHLASNIGVAKSQIRKKKPIVWEILQEILDDHPVLLNRAPTLHRLGIQAFLPVLVEGRAICLHPLVCKGFNADFDGDQMAVHVPLSLEAQAEARLLMFSHMNLLSPTIGDPISAPTQDMLSGLYVLTSGNRRGICVNRYNPCNRRNYQNEDNNYKYTKKKEPFFCNPYDAIGAYRQKRINLGSPLWLRWRLDQRVIAAREVPIEIHYESVGTYYEIYGHYLIVRSIKKEILYIYIRTTLGHISLYREIEEAIQGFWQGCCNSMLPTGIRVSPG.

Residues Cys69, Cys71, Cys87, and Cys90 each contribute to the Zn(2+) site. Mg(2+)-binding residues include Asp489, Asp491, and Asp493.

Belongs to the RNA polymerase beta' chain family. RpoC1 subfamily. As to quaternary structure, in plastids the minimal PEP RNA polymerase catalytic core is composed of four subunits: alpha, beta, beta', and beta''. When a (nuclear-encoded) sigma factor is associated with the core the holoenzyme is formed, which can initiate transcription. The cofactor is Mg(2+). Requires Zn(2+) as cofactor.

It is found in the plastid. The protein resides in the chloroplast. The catalysed reaction is RNA(n) + a ribonucleoside 5'-triphosphate = RNA(n+1) + diphosphate. DNA-dependent RNA polymerase catalyzes the transcription of DNA into RNA using the four ribonucleoside triphosphates as substrates. The polypeptide is DNA-directed RNA polymerase subunit beta' (Lactuca sativa (Garden lettuce)).